Here is a 541-residue protein sequence, read N- to C-terminus: Putative acyl-CoA dehydrogenase AidB (541 aa).

Residues 182 to 191, Thr-185, Ser-191, 216 to 218, Ser-218, 423 to 433, and Asn-429 contribute to the FAD site; these read MGMTEKQGGS, FFS, and IWEGSGNIMCL. The dsDNA-binding stretch occupies residues 445 to 541; sequence VYDLLSEAFV…LLRATGGVCV (97 aa).

Belongs to the acyl-CoA dehydrogenase family. In terms of assembly, homotetramer. Dimer of dimers. FAD is required as a cofactor.

The protein resides in the cytoplasm. In terms of biological role, part of the adaptive DNA-repair response to alkylating agents. Could prevent alkylation damage by protecting DNA and destroying alkylating agents that have yet to reach their DNA target. Binds to double-stranded DNA with a preference for a DNA region that includes its own promoter. Shows weak isovaleryl-CoA dehydrogenase activity in vitro. This chain is Putative acyl-CoA dehydrogenase AidB (aidB), found in Escherichia coli (strain K12).